Reading from the N-terminus, the 751-residue chain is Photosystem I P700 chlorophyll a apoprotein A1 (751 aa).

The next 8 helical transmembrane spans lie at 73 to 96 (VFSA…FHGA), 159 to 182 (LYTT…FHYH), 198 to 222 (LNHH…HVSL), 294 to 312 (TAHH…GHMY), 349 to 372 (WHAQ…HHMY), 388 to 414 (LSLF…IFMV), 436 to 458 (AIIS…LYIH), and 533 to 551 (FMVH…LILL). The [4Fe-4S] cluster site is built by Cys-575 and Cys-584. The next 2 membrane-spanning stretches (helical) occupy residues 591 to 612 (HVFL…HFSW) and 665 to 687 (LSAY…LDIF). His-676 lines the chlorophyll a' pocket. Chlorophyll a contacts are provided by Met-683 and Tyr-692. Phylloquinone is bound at residue Trp-693. A helical transmembrane segment spans residues 725–745 (AVGVAHYLLGGIATTWSFFLA).

It belongs to the PsaA/PsaB family. In terms of assembly, the PsaA/B heterodimer binds the P700 chlorophyll special pair and subsequent electron acceptors. PSI consists of a core antenna complex that captures photons, and an electron transfer chain that converts photonic excitation into a charge separation. The eukaryotic PSI reaction center is composed of at least 11 subunits. P700 is a chlorophyll a/chlorophyll a' dimer, A0 is one or more chlorophyll a, A1 is one or both phylloquinones and FX is a shared 4Fe-4S iron-sulfur center. is required as a cofactor.

It is found in the plastid. The protein localises to the chloroplast thylakoid membrane. The catalysed reaction is reduced [plastocyanin] + hnu + oxidized [2Fe-2S]-[ferredoxin] = oxidized [plastocyanin] + reduced [2Fe-2S]-[ferredoxin]. PsaA and PsaB bind P700, the primary electron donor of photosystem I (PSI), as well as the electron acceptors A0, A1 and FX. PSI is a plastocyanin/cytochrome c6-ferredoxin oxidoreductase, converting photonic excitation into a charge separation, which transfers an electron from the donor P700 chlorophyll pair to the spectroscopically characterized acceptors A0, A1, FX, FA and FB in turn. Oxidized P700 is reduced on the lumenal side of the thylakoid membrane by plastocyanin or cytochrome c6. This Stigeoclonium helveticum (Green alga) protein is Photosystem I P700 chlorophyll a apoprotein A1.